We begin with the raw amino-acid sequence, 243 residues long: CTD nuclear envelope phosphatase 1 homolog (243 aa).

Residues 11-27 (ALLLLLSKVWTCICFMF) traverse the membrane as a helical segment. Positions 56–223 (SLVQRKTLVL…LSLLPMLDAL (168 aa)) constitute an FCP1 homology domain.

Belongs to the dullard family.

Its subcellular location is the membrane. It catalyses the reaction O-phospho-L-seryl-[protein] + H2O = L-seryl-[protein] + phosphate. It carries out the reaction O-phospho-L-threonyl-[protein] + H2O = L-threonyl-[protein] + phosphate. Its function is as follows. Serine/threonine protein phosphatase that may dephosphorylate and activate lipin-like phosphatases. Lipins are phosphatidate phosphatases that catalyze the conversion of phosphatidic acid to diacylglycerol and control the metabolism of fatty acids at different levels. May indirectly modulate the lipid composition of nuclear and/or endoplasmic reticulum membranes and be required for proper nuclear membrane morphology and/or dynamics. May also indirectly regulate the production of lipid droplets and triacylglycerol. This chain is CTD nuclear envelope phosphatase 1 homolog (Dd), found in Drosophila melanogaster (Fruit fly).